A 240-amino-acid polypeptide reads, in one-letter code: Transmembrane emp24 domain-containing protein 6 (240 aa).

An N-terminal signal peptide occupies residues 1 to 21 (MSPLLFGAGLVVLNLVTSARS). The Lumenal segment spans residues 22–200 (QKTEPLSGSG…FFLIQSNYNY (179 aa)). The GOLD domain occupies 53 to 138 (TECFWQFAHQ…SVQVYLNFGV (86 aa)). 2 N-linked (GlcNAc...) asparagine glycosylation sites follow: N107 and N156. A helical transmembrane segment spans residues 201 to 223 (VNWWSTAQSLVIILSGILQLYFL). Over 224–240 (KRLFNVPTTTDTKKPRC) the chain is Cytoplasmic.

Belongs to the EMP24/GP25L family.

It is found in the endoplasmic reticulum membrane. This Homo sapiens (Human) protein is Transmembrane emp24 domain-containing protein 6 (TMED6).